Reading from the N-terminus, the 141-residue chain is Hemoglobin subunit alpha-1/2 (141 aa).

The Globin domain occupies 1 to 141 (VLSPTDKTNV…VSTVLTSKYR (141 aa)). Serine 3 carries the post-translational modification Phosphoserine. N6-succinyllysine is present on lysine 7. Threonine 8 is subject to Phosphothreonine. Lysine 11 is subject to N6-succinyllysine. Lysine 16 bears the N6-acetyllysine; alternate mark. The residue at position 16 (lysine 16) is an N6-succinyllysine; alternate. Residue tyrosine 24 is modified to Phosphotyrosine. The residue at position 40 (lysine 40) is an N6-succinyllysine. Serine 49 carries the post-translational modification Phosphoserine. Residue histidine 58 coordinates O2. Histidine 87 provides a ligand contact to heme b. Position 102 is a phosphoserine (serine 102). Position 108 is a phosphothreonine (threonine 108). At serine 124 the chain carries Phosphoserine. A phosphothreonine mark is found at threonine 134 and threonine 137. Phosphoserine is present on serine 138.

Belongs to the globin family. Heterotetramer of two alpha chains and two beta chains. As to expression, red blood cells.

Functionally, involved in oxygen transport from the lung to the various peripheral tissues. The polypeptide is Hemoglobin subunit alpha-1/2 (Tapirus terrestris (Lowland tapir)).